A 293-amino-acid chain; its full sequence is Single-pass membrane and coiled-coil domain-containing protein 2 (293 aa).

The stretch at 116–188 (KNLLEFLLKD…SAKLRMYQME (73 aa)) forms a coiled coil. The helical transmembrane segment at 234–254 (IFIMFYVLTVTGLLCYILFFG) threads the bilayer.

It localises to the membrane. In Macaca fascicularis (Crab-eating macaque), this protein is Single-pass membrane and coiled-coil domain-containing protein 2 (SMCO2).